Reading from the N-terminus, the 329-residue chain is tRNA pseudouridine synthase B (329 aa).

Asp42 functions as the Nucleophile in the catalytic mechanism.

This sequence belongs to the pseudouridine synthase TruB family. Type 1 subfamily.

The catalysed reaction is uridine(55) in tRNA = pseudouridine(55) in tRNA. In terms of biological role, responsible for synthesis of pseudouridine from uracil-55 in the psi GC loop of transfer RNAs. The sequence is that of tRNA pseudouridine synthase B from Lactococcus lactis subsp. lactis (strain IL1403) (Streptococcus lactis).